Here is a 347-residue protein sequence, read N- to C-terminus: D-alanine--D-alanine ligase (347 aa).

Residues 134–332 enclose the ATP-grasp domain; sequence KLYAKDLGIK…LAQSLPKTPK (199 aa). 161–216 is a binding site for ATP; it reads LINFNFPFIIKPNSAGSSLGVSVVKEEKELNYALDSAFEYSKEVLIEPFIQGVKEY. Mg(2+) contacts are provided by Asp-288, Glu-300, and Asn-302.

The protein belongs to the D-alanine--D-alanine ligase family. It depends on Mg(2+) as a cofactor. The cofactor is Mn(2+).

It localises to the cytoplasm. It catalyses the reaction 2 D-alanine + ATP = D-alanyl-D-alanine + ADP + phosphate + H(+). The protein operates within cell wall biogenesis; peptidoglycan biosynthesis. Functionally, cell wall formation. This Helicobacter pylori (strain HPAG1) protein is D-alanine--D-alanine ligase.